The primary structure comprises 278 residues: Non-structural protein 2a (278 aa).

The protein belongs to the coronaviruses ns2a protein family.

This chain is Non-structural protein 2a, found in Bovine coronavirus (strain Mebus) (BCoV).